A 196-amino-acid chain; its full sequence is Cysteine/O-acetylserine efflux protein (196 aa).

Residues 1 to 21 (MTPTLISAFLTYTLITALTPG) form a helical membrane-spanning segment. Residues 22-41 (PNNILALSSVTSHGLRRSLR) are Cytoplasmic-facing. A helical membrane pass occupies residues 42-62 (VLAGMSVGFIITMLICAALTF). Topologically, residues 63–70 (SLVELDSR) are periplasmic. A helical transmembrane segment spans residues 71 to 91 (FTLVLGWIGAAYILWLAWQIA). Over 92 to 114 (KSKPATGTPSVEPVGFWASLGLQ) the chain is Cytoplasmic. The helical transmembrane segment at 115-135 (FVNVKIILYGITALSTFVLPV) threads the bilayer. Residues 136–139 (TREP) lie on the Periplasmic side of the membrane. The chain crosses the membrane as a helical span at residues 140 to 160 (VWLISVSLLLAAIGALGNLCW). Residues 161–170 (ALAGHLFQRL) lie on the Cytoplasmic side of the membrane. The helical transmembrane segment at 171–191 (FLLYGRQLNWMLAALLVYCAV) threads the bilayer. Topologically, residues 192–196 (RIVVE) are periplasmic.

The protein belongs to the Rht family.

It is found in the cell inner membrane. The enzyme catalyses O-acetyl-L-serine(in) = O-acetyl-L-serine(out). It catalyses the reaction L-cysteine(in) = L-cysteine(out). Its function is as follows. Exporter of O-acetylserine (OAS) and cysteine. The protein is Cysteine/O-acetylserine efflux protein (eamB) of Klebsiella pneumoniae subsp. pneumoniae (strain ATCC 700721 / MGH 78578).